Consider the following 155-residue polypeptide: Transcription antitermination protein NusB (155 aa).

It belongs to the NusB family.

Functionally, involved in transcription antitermination. Required for transcription of ribosomal RNA (rRNA) genes. Binds specifically to the boxA antiterminator sequence of the ribosomal RNA (rrn) operons. The protein is Transcription antitermination protein NusB of Azoarcus sp. (strain BH72).